A 380-amino-acid chain; its full sequence is Cytochrome b (380 aa).

4 helical membrane passes run 34–54 (FGSL…LLAM), 78–99 (WLIR…YLHI), 114–134 (WNTG…GYVL), and 179–199 (FFAL…IHLT). Heme b contacts are provided by His84 and His98. Heme b is bound by residues His183 and His197. His202 serves as a coordination point for a ubiquinone. Helical transmembrane passes span 227 to 247 (TKDI…AMFA), 289 to 309 (LGGV…PFLH), 321 to 341 (LSQL…WIGS), and 348 to 368 (FIIT…ILFP).

This sequence belongs to the cytochrome b family. As to quaternary structure, the cytochrome bc1 complex contains 11 subunits: 3 respiratory subunits (MT-CYB, CYC1 and UQCRFS1), 2 core proteins (UQCRC1 and UQCRC2) and 6 low-molecular weight proteins (UQCRH/QCR6, UQCRB/QCR7, UQCRQ/QCR8, UQCR10/QCR9, UQCR11/QCR10 and a cleavage product of UQCRFS1). This cytochrome bc1 complex then forms a dimer. Heme b is required as a cofactor.

It localises to the mitochondrion inner membrane. Functionally, component of the ubiquinol-cytochrome c reductase complex (complex III or cytochrome b-c1 complex) that is part of the mitochondrial respiratory chain. The b-c1 complex mediates electron transfer from ubiquinol to cytochrome c. Contributes to the generation of a proton gradient across the mitochondrial membrane that is then used for ATP synthesis. The polypeptide is Cytochrome b (MT-CYB) (Aphanotriccus audax (Black-billed flycatcher)).